Reading from the N-terminus, the 89-residue chain is MAHHKSAKKRILQTAKRTERNRYYRTRIKNITKAVHEAVEAADMTAAQEAFKVANKQIHSLVSKGFIKKATAARKVSRLHKMVNKIEAA.

It belongs to the bacterial ribosomal protein bS20 family.

Its function is as follows. Binds directly to 16S ribosomal RNA. This chain is Small ribosomal subunit protein bS20, found in Sulfurovum sp. (strain NBC37-1).